Reading from the N-terminus, the 246-residue chain is Ribosomal RNA small subunit methyltransferase G (246 aa).

Residues Gly81, Phe86, 137–138 (AE), and Arg156 each bind S-adenosyl-L-methionine. Residues 221-246 (LVLIRKERPTPKAYPRRAGVPAKSPL) form a disordered region.

Belongs to the methyltransferase superfamily. RNA methyltransferase RsmG family.

It localises to the cytoplasm. In terms of biological role, specifically methylates the N7 position of a guanine in 16S rRNA. The sequence is that of Ribosomal RNA small subunit methyltransferase G from Symbiobacterium thermophilum (strain DSM 24528 / JCM 14929 / IAM 14863 / T).